A 129-amino-acid chain; its full sequence is Acetophenone carboxylase beta subunit (129 aa).

As to quaternary structure, acetophenone carboxylase consists of five subunits; a heterooctameric subcomplex of two alpha (Apc1), two beta (Apc2), two gamma (Apc3) and two delta (Apc4) subunits assembles with the epsilon (Apc5) subunit in an unknown stoichiometry. Requires Mg(2+) as cofactor. Mn(2+) serves as cofactor.

It localises to the cytoplasm. The enzyme catalyses acetophenone + hydrogencarbonate + 2 ATP + H2O = 3-oxo-3-phenylpropanoate + 2 ADP + 2 phosphate + 2 H(+). Its activity is regulated as follows. Inhibited by zinc ions, carbamoylphosphate and beta,gamma-imido-ATP. Catalyzes the carboxylation of acetophenone to form 3-oxo-3-phenylpropanoate (benzoylacetate) in the anaerobic catabolism of ethylbenzene. Also carboxylates propiophenone at the same rate and 4-acetyl-pyridine at lower rates. The chain is Acetophenone carboxylase beta subunit (apc2) from Aromatoleum aromaticum (strain DSM 19018 / LMG 30748 / EbN1) (Azoarcus sp. (strain EbN1)).